The chain runs to 348 residues: Endoplasmic reticulum junction formation protein lunapark-A (348 aa).

Residues 1–43 are Cytoplasmic-facing; that stretch reads MSVFCLQAKPTTVEILEGIDKDIQILEDYSVKYQRQMKAVVGR. Residues 44 to 64 form a helical membrane-spanning segment; the sequence is LLLYSILLYLMAGVVVYSWYL. The Lumenal portion of the chain corresponds to 65 to 67; it reads PEQ. A helical transmembrane segment spans residues 68–88; that stretch reads LMGRLVLGLPFLLFPLLVWIL. Residues 89-348 are Cytoplasmic-facing; it reads RKVLILFFAR…EEDKQSDSGD (260 aa). The stretch at 105-126 forms a coiled coil; sequence FKLEDLKAQKRKILEDVMETET. The segment at 142–211 is disordered; it reads KKKTDFDSTP…HSAPGGPPER (70 aa). The C4-type; plays a role in ER morphology zinc finger occupies 277–302; the sequence is CQQCLSHNGMALKEEFEYVAFRCAYC. The segment at 313 to 348 is disordered; the sequence is PQAPRLPETAGEPKLPCDLNSSSCAAEEDKQSDSGD. A compositionally biased stretch (basic and acidic residues) spans 339–348; it reads EEDKQSDSGD.

The protein belongs to the lunapark family. In terms of assembly, homodimer; homodimerization requires the C4-type zinc finger motif and decreases during mitosis in a phosphorylation-dependent manner. In terms of processing, phosphorylated. Phosphorylation occurs during interphase. Phosphorylation also occurs during mitosis; these phosphorylations reduce both its homodimerization and the ER three-way tubular junction formation.

It localises to the endoplasmic reticulum membrane. In terms of biological role, endoplasmic reticulum (ER)-shaping membrane protein that plays a role in determining ER morphology. Involved in the stabilization of nascent three-way ER tubular junctions within the ER network. May also play a role as a curvature-stabilizing protein within three-way ER tubular junction network. The polypeptide is Endoplasmic reticulum junction formation protein lunapark-A (lnpka) (Takifugu rubripes (Japanese pufferfish)).